Consider the following 320-residue polypeptide: Methionyl-tRNA formyltransferase (320 aa).

111–114 (SLLP) is a binding site for (6S)-5,6,7,8-tetrahydrofolate.

Belongs to the Fmt family.

It carries out the reaction L-methionyl-tRNA(fMet) + (6R)-10-formyltetrahydrofolate = N-formyl-L-methionyl-tRNA(fMet) + (6S)-5,6,7,8-tetrahydrofolate + H(+). Attaches a formyl group to the free amino group of methionyl-tRNA(fMet). The formyl group appears to play a dual role in the initiator identity of N-formylmethionyl-tRNA by promoting its recognition by IF2 and preventing the misappropriation of this tRNA by the elongation apparatus. The protein is Methionyl-tRNA formyltransferase of Pediococcus pentosaceus (strain ATCC 25745 / CCUG 21536 / LMG 10740 / 183-1w).